The chain runs to 293 residues: Inner membrane ABC transporter permease protein YcjO (293 aa).

Over 1–12 the chain is Periplasmic; that stretch reads MNRLFSGRSDMP. Residues 13-33 form a helical membrane-spanning segment; the sequence is FALLLLAPSLLLLGGLVAWPM. At 34-77 the chain is on the cytoplasmic side; the sequence is VSNIEISFLRLPLNPNIESTFVGVSNYVRILSDPGFWHSLWMTV. Positions 73–283 constitute an ABC transmembrane type-1 domain; it reads LWMTVWYTAL…IIIFAVILLT (211 aa). The helical transmembrane segment at 78-98 threads the bilayer; sequence WYTALVVAGSTVLGLAVAMFF. Residues 99 to 110 are Periplasmic-facing; it reads NREFRLRKTARS. The chain crosses the membrane as a helical span at residues 111–131; it reads LVILSYVTPSISLVFAWKYMF. Residues 132–135 lie on the Cytoplasmic side of the membrane; that stretch reads NNGY. The chain crosses the membrane as a helical span at residues 136–156; that stretch reads GIVNYLGVDLLHLYEQAPLWF. Over 157 to 162 the chain is Periplasmic; the sequence is DNPGSS. A helical membrane pass occupies residues 163 to 183; that stretch reads FVLVVLFAIWRYFPYAFISFL. The Cytoplasmic segment spans residues 184-214; that stretch reads AILQTIDKSLYEAAEMDGANAWQRFRIVTLP. The chain crosses the membrane as a helical span at residues 215–235; sequence AIMPVLATVVTLRTIWMFYMF. Residues 236–261 lie on the Periplasmic side of the membrane; that stretch reads ADVYLLTTKVDILGVYLYKTAFAFND. A helical membrane pass occupies residues 262–282; that stretch reads LGKAAAISVVLFIIIFAVILL. The Cytoplasmic portion of the chain corresponds to 283 to 293; it reads TRKRVNLNGNK.

The protein belongs to the binding-protein-dependent transport system permease family. MalFG subfamily.

It is found in the cell inner membrane. Functionally, probably part of the binding-protein-dependent transport system YcjNOP. Probably responsible for the translocation of the substrate across the membrane. This Escherichia coli (strain K12) protein is Inner membrane ABC transporter permease protein YcjO (ycjO).